We begin with the raw amino-acid sequence, 139 residues long: D-ribose pyranase (139 aa).

His-20 serves as the catalytic Proton donor. Substrate contacts are provided by residues Asp-28, His-106, and 128 to 130 (YAN).

The protein belongs to the RbsD / FucU family. RbsD subfamily. Homodecamer.

It is found in the cytoplasm. The catalysed reaction is beta-D-ribopyranose = beta-D-ribofuranose. The protein operates within carbohydrate metabolism; D-ribose degradation; D-ribose 5-phosphate from beta-D-ribopyranose: step 1/2. Functionally, catalyzes the interconversion of beta-pyran and beta-furan forms of D-ribose. This is D-ribose pyranase from Vibrio campbellii (strain ATCC BAA-1116).